The sequence spans 241 residues: Large ribosomal subunit protein uL2 (241 aa).

Positions 201–241 (VDHPHGGGNRQHPGRPTTVSRHAPPGRKVGSIAAKRTGLKR) are disordered.

Belongs to the universal ribosomal protein uL2 family. Part of the 50S ribosomal subunit. Forms a bridge to the 30S subunit in the 70S ribosome.

Its function is as follows. One of the primary rRNA binding proteins. Required for association of the 30S and 50S subunits to form the 70S ribosome, for tRNA binding and peptide bond formation. It has been suggested to have peptidyltransferase activity; this is somewhat controversial. Makes several contacts with the 16S rRNA in the 70S ribosome. The polypeptide is Large ribosomal subunit protein uL2 (Methanobrevibacter smithii (strain ATCC 35061 / DSM 861 / OCM 144 / PS)).